Here is a 235-residue protein sequence, read N- to C-terminus: Large ribosomal subunit protein uL1 (235 aa).

The protein belongs to the universal ribosomal protein uL1 family. Part of the 50S ribosomal subunit.

Its function is as follows. Binds directly to 23S rRNA. The L1 stalk is quite mobile in the ribosome, and is involved in E site tRNA release. Protein L1 is also a translational repressor protein, it controls the translation of the L11 operon by binding to its mRNA. The polypeptide is Large ribosomal subunit protein uL1 (Renibacterium salmoninarum (strain ATCC 33209 / DSM 20767 / JCM 11484 / NBRC 15589 / NCIMB 2235)).